Here is a 204-residue protein sequence, read N- to C-terminus: Glycerol-3-phosphate acyltransferase (204 aa).

The next 5 helical transmembrane spans lie at 8 to 28, 53 to 73, 81 to 101, 116 to 136, and 155 to 175; these read ILIF…CYIF, VPAA…VVIA, FITA…IFFG, FGFS…VAII, and VIFT…IIIL.

This sequence belongs to the PlsY family. Probably interacts with PlsX.

Its subcellular location is the cell inner membrane. It catalyses the reaction an acyl phosphate + sn-glycerol 3-phosphate = a 1-acyl-sn-glycero-3-phosphate + phosphate. It functions in the pathway lipid metabolism; phospholipid metabolism. Functionally, catalyzes the transfer of an acyl group from acyl-phosphate (acyl-PO(4)) to glycerol-3-phosphate (G3P) to form lysophosphatidic acid (LPA). This enzyme utilizes acyl-phosphate as fatty acyl donor, but not acyl-CoA or acyl-ACP. The chain is Glycerol-3-phosphate acyltransferase from Francisella tularensis subsp. novicida (strain U112).